We begin with the raw amino-acid sequence, 168 residues long: Photosystem I assembly protein Ycf3 (168 aa).

3 TPR repeats span residues 35-68 (AFTYYRDGMSAQSEGNYAEALQNYYEATRPEIDP), 72-105 (SYILYNIGLIHTSNGEHTKALEYYFRALERNPFL), and 120-153 (GEQAILQGDSEIAEAWFDQAAEYWKQAIALTPGN).

This sequence belongs to the Ycf3 family.

It is found in the plastid. The protein resides in the chloroplast thylakoid membrane. Its function is as follows. Essential for the assembly of the photosystem I (PSI) complex. May act as a chaperone-like factor to guide the assembly of the PSI subunits. The protein is Photosystem I assembly protein Ycf3 of Phalaenopsis aphrodite subsp. formosana (Moth orchid).